We begin with the raw amino-acid sequence, 672 residues long: Ubiquitin carboxyl-terminal hydrolase 19 (672 aa).

The chain crosses the membrane as a helical span at residues 11 to 31; sequence NSFTQLILTLFFVSIGLLYFV. Zn(2+)-binding residues include C64, C67, C75, C78, C84, C88, H97, and C101. The MYND-type zinc-finger motif lies at 64 to 101; it reads CSVCGKATTKKCSRCKSVRYCSAACQTSDWKSGHKLKC. One can recognise a USP domain in the interval 174–480; it reads CGLTNCGNSC…RAYMLLYSRV (307 aa). Catalysis depends on C183, which acts as the Nucleophile. H439 serves as the catalytic Proton acceptor. The segment at 484–672 is disordered; the sequence is PSNLRSEESQ…HSDTEMIDAQ (189 aa). The span at 488-499 shows a compositional bias: basic and acidic residues; it reads RSEESQDEKKTD. Over residues 500-527 the composition is skewed to polar residues; that stretch reads TLNTESNQDGSVESSGVGTNDTSVSSLC. Basic and acidic residues-rich tracts occupy residues 533-543 and 553-594; these read HSEDPEYEKES and EEGK…KEDP. A compositionally biased stretch (polar residues) spans 606–615; the sequence is LDITTPSPSA. Residues 623-666 are compositionally biased toward basic and acidic residues; that stretch reads ENERSDTESKPLEKEHSDTESNKPLEKEHLDSESKPLEKEHSDT.

Belongs to the peptidase C19 family.

Its subcellular location is the membrane. It catalyses the reaction Thiol-dependent hydrolysis of ester, thioester, amide, peptide and isopeptide bonds formed by the C-terminal Gly of ubiquitin (a 76-residue protein attached to proteins as an intracellular targeting signal).. Its function is as follows. Recognizes and hydrolyzes the peptide bond at the C-terminal Gly of ubiquitin. Involved in the processing of poly-ubiquitin precursors as well as that of ubiquitinated proteins. The sequence is that of Ubiquitin carboxyl-terminal hydrolase 19 (UBP19) from Arabidopsis thaliana (Mouse-ear cress).